A 451-amino-acid chain; its full sequence is Bifunctional protein GlmU (451 aa).

The tract at residues 1–225 is pyrophosphorylase; it reads MVVVAILAAG…YQEILGINDR (225 aa). Residues 7–10, Lys-21, Gln-72, and 77–78 each bind UDP-N-acetyl-alpha-D-glucosamine; these read LAAG and GT. Asp-102 contacts Mg(2+). UDP-N-acetyl-alpha-D-glucosamine contacts are provided by Gly-139, Glu-154, Asn-169, and Asn-223. Asn-223 serves as a coordination point for Mg(2+). Positions 226-246 are linker; that stretch reads LQLATAYEILQRRVKEQWMMA. The segment at 247 to 451 is N-acetyltransferase; the sequence is GVTLIDPNSI…PGWRKKSGES (205 aa). UDP-N-acetyl-alpha-D-glucosamine contacts are provided by Arg-328 and Lys-346. His-358 acts as the Proton acceptor in catalysis. Tyr-361 and Asn-372 together coordinate UDP-N-acetyl-alpha-D-glucosamine. Residues Ala-375, 381–382, Ser-400, Ala-418, and Arg-435 each bind acetyl-CoA; that span reads NY.

The protein in the N-terminal section; belongs to the N-acetylglucosamine-1-phosphate uridyltransferase family. This sequence in the C-terminal section; belongs to the transferase hexapeptide repeat family. Homotrimer. It depends on Mg(2+) as a cofactor.

The protein resides in the cytoplasm. The catalysed reaction is alpha-D-glucosamine 1-phosphate + acetyl-CoA = N-acetyl-alpha-D-glucosamine 1-phosphate + CoA + H(+). It catalyses the reaction N-acetyl-alpha-D-glucosamine 1-phosphate + UTP + H(+) = UDP-N-acetyl-alpha-D-glucosamine + diphosphate. The protein operates within nucleotide-sugar biosynthesis; UDP-N-acetyl-alpha-D-glucosamine biosynthesis; N-acetyl-alpha-D-glucosamine 1-phosphate from alpha-D-glucosamine 6-phosphate (route II): step 2/2. Its pathway is nucleotide-sugar biosynthesis; UDP-N-acetyl-alpha-D-glucosamine biosynthesis; UDP-N-acetyl-alpha-D-glucosamine from N-acetyl-alpha-D-glucosamine 1-phosphate: step 1/1. It participates in bacterial outer membrane biogenesis; LPS lipid A biosynthesis. Catalyzes the last two sequential reactions in the de novo biosynthetic pathway for UDP-N-acetylglucosamine (UDP-GlcNAc). The C-terminal domain catalyzes the transfer of acetyl group from acetyl coenzyme A to glucosamine-1-phosphate (GlcN-1-P) to produce N-acetylglucosamine-1-phosphate (GlcNAc-1-P), which is converted into UDP-GlcNAc by the transfer of uridine 5-monophosphate (from uridine 5-triphosphate), a reaction catalyzed by the N-terminal domain. In Trichormus variabilis (strain ATCC 29413 / PCC 7937) (Anabaena variabilis), this protein is Bifunctional protein GlmU.